A 490-amino-acid chain; its full sequence is Cysteine protease 1 (490 aa).

The N-terminal stretch at 1 to 31 is a signal peptide; it reads MAGGGGKSVAAALAMACFLLILAAFAPPAAA. A propeptide spans 32–154 (activation peptide); that stretch reads APPDIMSIIR…EAYRHDGVEA (123 aa). Disulfide bonds link Cys-177/Cys-220, Cys-211/Cys-253, Cys-311/Cys-364, Cys-395/Cys-407, and Cys-401/Cys-422. Cys-180 is an active-site residue. Residues His-317 and Asn-339 contribute to the active site. Residue Asn-356 is glycosylated (N-linked (GlcNAc...) asparagine). Positions 379 to 490 are cleaved as a propeptide — removed in mature form; it reads NPKPSPPSPA…FVVLNREDLV (112 aa).

The protein belongs to the peptidase C1 family. In terms of tissue distribution, highly expressed in the tapetum and developing pollen of the anther locules. Weakly expressed in root and germinating seed, hardly in the anther-less-flower and not detected in leaf.

Its function is as follows. Cysteine protease that may play a role in pollen development. May be regulated by the transcription factor UDT1 in developing anthers and play a role in tapetum development. Positively regulated by the transcription factor TDR in developing anthers and may play a role in tapetum programmed cell death (PCD). The chain is Cysteine protease 1 (CP1) from Oryza sativa subsp. japonica (Rice).